Here is a 383-residue protein sequence, read N- to C-terminus: ATP phosphoribosyltransferase regulatory subunit (383 aa).

It belongs to the class-II aminoacyl-tRNA synthetase family. HisZ subfamily. In terms of assembly, heteromultimer composed of HisG and HisZ subunits.

It localises to the cytoplasm. It participates in amino-acid biosynthesis; L-histidine biosynthesis; L-histidine from 5-phospho-alpha-D-ribose 1-diphosphate: step 1/9. Its function is as follows. Required for the first step of histidine biosynthesis. May allow the feedback regulation of ATP phosphoribosyltransferase activity by histidine. The chain is ATP phosphoribosyltransferase regulatory subunit from Janthinobacterium sp. (strain Marseille) (Minibacterium massiliensis).